We begin with the raw amino-acid sequence, 157 residues long: Chromophore lyase CpcS/CpeS 1 (157 aa).

Belongs to the CpcS/CpeS biliprotein lyase family.

It is found in the plastid. Its subcellular location is the organellar chromatophore. Its function is as follows. Covalently attaches a chromophore to Cys residue(s) of phycobiliproteins. This Paulinella chromatophora protein is Chromophore lyase CpcS/CpeS 1.